The primary structure comprises 715 residues: ATP-binding cassette sub-family B member 10, mitochondrial (715 aa).

Residues 1-82 constitute a mitochondrion transit peptide; the sequence is MRAPSARALL…SSGARRCWVL (82 aa). The Mitochondrial matrix portion of the chain corresponds to 83 to 133; it reads AGPRAAHPLFARLQGAAATGVRDLGNDSQRRPAATGRSEVWKLLGLVRPER. A helical membrane pass occupies residues 134–157; the sequence is GRLSAAVGFLAVSSVITMSAPFFL. The ABC transmembrane type-1 domain maps to 136–422; sequence LSAAVGFLAV…LSSFYSELMK (287 aa). At 158 to 178 the chain is on the mitochondrial intermembrane side; the sequence is GRIIDVIYTNPSEGYGDSLTR. Residues 179–201 form a helical membrane-spanning segment; it reads LCAVLTCVFLCGAAANGIRVYLM. Over 202–252 the chain is Mitochondrial matrix; it reads QSSGQSIVNRLRTSLFSSILRQEVAFFDKTRTGELINRLSSDTALLGRSVT. An N6-acetyllysine modification is found at lysine 230. Residues 253–275 form a helical membrane-spanning segment; it reads ENLSDGLRAGAQASVGVGMMFFV. Over 276-278 the chain is Mitochondrial intermembrane; the sequence is SPS. The helical transmembrane segment at 279–298 threads the bilayer; sequence LATFVLSVVPPISVLAVIYG. The Mitochondrial matrix segment spans residues 299-357; it reads RYLRKLSKATQDSLAEATQLAEERIGNIRTIRAFGKEMTEVEKYTGRVDQLLQLAQKEA. Residues 358–381 form a helical membrane-spanning segment; it reads LARAGFFGAAGLSGNLIVLSVLYK. Residues 382 to 395 lie on the Mitochondrial intermembrane side of the membrane; it reads GGLLMGSAHMTVGE. The helical transmembrane segment at 396-417 threads the bilayer; it reads LSSFLMYAFWVGLSIGGLSSFY. Over 418 to 715 the chain is Mitochondrial matrix; the sequence is SELMKGLGAG…AEQFLEPARA (298 aa). In terms of domain architecture, ABC transporter spans 457–696; the sequence is LEFRNVHFTY…PNGLYRKLMN (240 aa). Residues glycine 495, glycine 497, lysine 498, serine 499, and threonine 500 each coordinate ATP. Serine 499 is a Mg(2+) binding site. Cysteine 547 bears the S-glutathionyl cysteine mark. Aspartate 623 serves as a coordination point for Mg(2+).

This sequence belongs to the ABC transporter superfamily. ABCB family. Mitochondrial peptide exporter (TC 3.A.1.212) subfamily. In terms of assembly, homodimer or homooligomer. Interacts with PAAT; this interaction regulates ABCB10. Interacts with SLC25A37; this interaction stabilizes SLC25A37 and enhances the function of SLC25A37 to import mitochondrial iron during erythroid differentiation. Interacts with FECH; this interaction may allow the formation of the oligomeric complex with SLC25A37. Forms a complex with ABCB7 and FECH, where a dimeric FECH bridges ABCB7 and ABCB10 homodimers; this complex may be required for cellular iron homeostasis, mitochondrial function and heme biosynthesis. In terms of tissue distribution, expressed at particularly high levels in fetal liver, and erythroid tissues of embryos and adults. Found also in adult bone marrow, liver and kidney, and at lower levels in heart, brain and spleen.

Its subcellular location is the mitochondrion inner membrane. It catalyses the reaction biliverdin IXalpha(in) + ATP + H2O = biliverdin IXalpha(out) + ADP + phosphate + H(+). Oxidized glutathione (GSSG) stimulates ATP hydrolysis without affecting ATP binding, whereas reduced glutathione (GSH) inhibits ATP binding and hydrolysis. ATP-dependent transporter located in the mitochondrial inner membrane that catalyzes the export of biliverdin from the mitochondrial matrix, and plays a crucial role in hemoglobin synthesis and antioxidative stress. Participates in the early step of the heme biosynthetic process during insertion of iron into protoporphyrin IX (PPIX). Involved in the stabilization of the iron transporter mitoferrin-1/SLC25A37. In addition may be involved in mitochondrial unfolded protein response (UPRmt) signaling pathway, although ABCB10 probably does not participate in peptide export from mitochondria. This Mus musculus (Mouse) protein is ATP-binding cassette sub-family B member 10, mitochondrial.